The chain runs to 279 residues: Energy-coupling factor transporter ATP-binding protein EcfA1 (279 aa).

One can recognise an ABC transporter domain in the interval 5–240; sequence IELKKVTFNY…GDELLQLGLD (236 aa). 40–47 is an ATP binding site; the sequence is GHNGSGKS.

The protein belongs to the ABC transporter superfamily. Energy-coupling factor EcfA family. As to quaternary structure, forms a stable energy-coupling factor (ECF) transporter complex composed of 2 membrane-embedded substrate-binding proteins (S component), 2 ATP-binding proteins (A component) and 2 transmembrane proteins (T component).

It is found in the cell membrane. Its function is as follows. ATP-binding (A) component of a common energy-coupling factor (ECF) ABC-transporter complex. Unlike classic ABC transporters this ECF transporter provides the energy necessary to transport a number of different substrates. The chain is Energy-coupling factor transporter ATP-binding protein EcfA1 from Streptococcus pyogenes serotype M28 (strain MGAS6180).